The sequence spans 129 residues: Mitochondrial pyruvate carrier 2 (129 aa).

Topologically, residues 2–22 (STSSVRFAFRRFWQSETGPKT) are mitochondrial matrix. A helical membrane pass occupies residues 23–39 (VHFWAPTLKWGLVFAGF). At 40–54 (SDMKRPVEKISGAQN) the chain is on the mitochondrial intermembrane side. The chain crosses the membrane as a helical span at residues 55–71 (LSLLSTALIWTRWSFVI). The Mitochondrial matrix segment spans residues 72-74 (KPR). The helical transmembrane segment at 75–91 (NILLASVNSFLCLTAGY) threads the bilayer. Residues 92–129 (QLGRIANYRIRNGDSISQLCSYILSGADESKKEITTGR) lie on the Mitochondrial intermembrane side of the membrane.

Belongs to the mitochondrial pyruvate carrier (MPC) (TC 2.A.105) family. In terms of assembly, the functional 150 kDa pyruvate import complex is a heteromer of MPC1 and either MPC2 or MPC3.

The protein resides in the mitochondrion. The protein localises to the mitochondrion inner membrane. The catalysed reaction is pyruvate(out) + H(+)(out) = pyruvate(in) + H(+)(in). Functionally, mediates the uptake of pyruvate into mitochondria. In Saccharomyces cerevisiae (strain ATCC 204508 / S288c) (Baker's yeast), this protein is Mitochondrial pyruvate carrier 2.